The following is a 125-amino-acid chain: Small ribosomal subunit protein uS12 (125 aa).

Residue Asp89 is modified to 3-methylthioaspartic acid.

This sequence belongs to the universal ribosomal protein uS12 family. In terms of assembly, part of the 30S ribosomal subunit. Contacts proteins S8 and S17. May interact with IF1 in the 30S initiation complex.

Functionally, with S4 and S5 plays an important role in translational accuracy. In terms of biological role, interacts with and stabilizes bases of the 16S rRNA that are involved in tRNA selection in the A site and with the mRNA backbone. Located at the interface of the 30S and 50S subunits, it traverses the body of the 30S subunit contacting proteins on the other side and probably holding the rRNA structure together. The combined cluster of proteins S8, S12 and S17 appears to hold together the shoulder and platform of the 30S subunit. This is Small ribosomal subunit protein uS12 from Bordetella petrii (strain ATCC BAA-461 / DSM 12804 / CCUG 43448).